The primary structure comprises 503 residues: MFTATEAVPVAKVVAGNKRYPGVVALDNVNFTLNKGEVRALLGKNGAGKSTLIRMLTGSERPDSGDIWIGETRLEGDEATLTRRAAELGVRAVYQELSLVEGLTVAENLCLGQWPRRNGMIDYLQMAQDAQRCLQALGVDVSPEQLVSTLSPAQKQLVEIARVMKGEPRVVILDEPTSSLASAEVELVISAVKKMSALGVAVIYVSHRMEEIRRIASCATVMRDGQVAGDVMLENTSTHHIVSLMLGRDHVDIAPVAPQEIVDQAVLEVRALRHKPKLEDISFTLRRGEVLGIAGLLGAGRSELLKAIVGLEEYEQGEIVINGEKITRPDYGDMLKRGIGYTPENRKEAGIIPWLGVDENTVLTNRQKISANGVLQWSTIRRLTEEVMQRMTVKAASSETPIGTLSGGNQQKVVIGRWVYAASQILLLDEPTRGVDIEAKQQIYRIVRELAAEGKSVVFISSEVEELPLVCDRILLLQHGTFSQEFHAPVNVDELMSAILSVH.

ABC transporter domains are found at residues 8–249 (VPVA…LGRD) and 261–499 (IVDQ…MSAI). 43 to 50 (GKNGAGKS) provides a ligand contact to ATP.

The protein belongs to the ABC transporter superfamily.

Probably part of a binding-protein-dependent transport system YphDEF. Probably responsible for energy coupling to the transport system. This is an uncharacterized protein from Escherichia coli (strain K12).